The following is an 83-amino-acid chain: Scyreptin (83 aa).

In terms of biological role, cationic antimicrobial peptide that exhibits a potent and broad-spectrum antimicrobial activity against both bacteria and fungi, as well as against the multidrug-resistant bacteria P.aeruginosa. Exhibits rapid bactericidal kinetic. Acts by destroying the integrity of bacterial membranes, leading to bacterial death. Also exhibits potent anti-biofilm activity against P.aeruginosa. Shows high thermal stability and ion tolerance, as it maintains antibacterial activity even when heated to 100 degrees Celsius for 30 minutes and in presence of high levels of NaCl, CaCl(2) and MgCl(2). Does not show cytotoxicity and hemolytic activity. In a mouse model of burn infection, exhibits a remarkably reduction in the bacterial load caused by multidrug-resistant P.aeruginosa at the site of infection, and promotes wound healing. The polypeptide is Scyreptin (Scylla paramamosain (Mud crab)).